A 776-amino-acid polypeptide reads, in one-letter code: Semaphorin-4F (776 aa).

The first 39 residues, 1-39 (MLARAERPRPGPRPPPVFPFPPPLSLLLLLAILSAPVCG), serve as a signal peptide directing secretion. Residues 40–665 (RVPRSVPRTS…GPSNRAHTVV (626 aa)) lie on the Extracellular side of the membrane. The 469-residue stretch at 47-515 (RTSLPISEAD…SHTEVTQVNT (469 aa)) folds into the Sema domain. Asn-69 carries N-linked (GlcNAc...) asparagine glycosylation. Cys-117 and Cys-127 form a disulfide bridge. An N-linked (GlcNAc...) asparagine glycan is attached at Asn-138. 3 disulfide bridges follow: Cys-145/Cys-154, Cys-278/Cys-389, and Cys-302/Cys-348. An N-linked (GlcNAc...) asparagine glycan is attached at Asn-514. Positions 517 to 568 (NCGRLQSCSECILAQDPVCAWSFRLDACVAHAGEHRGMVQDIESADVSSLCP) constitute a PSI domain. 3 cysteine pairs are disulfide-bonded: Cys-518–Cys-535, Cys-527–Cys-544, and Cys-592–Cys-633. In terms of domain architecture, Ig-like C2-type spans 585 to 640 (VGHVVLPCSPSSAWASCVWHQPSGVTALTPRRDGLEVVVTPGAMGAYACECQEGGA). The helical transmembrane segment at 666–686 (GAGLVGFLLGVLAASLTLLLI) threads the bilayer. Topologically, residues 687–776 (GRRQQRRRQR…PLATCDETSI (90 aa)) are cytoplasmic. A disordered region spans residues 702–741 (DKVGLDLGAPPSGTTSYSQDPPSPSPEDERLPLALGKRGS). 2 positions are modified to phosphoserine: Ser-724 and Ser-726. A PDZ-binding motif is present at residues 774 to 776 (TSI).

The protein belongs to the semaphorin family. Interacts (via PDZ-binding motif) with DLG4/SAP90 (via PDZ domain 2); this interaction may promote translocation of DLG4/SAP90 to the membrane. Expressed at low levels in the developing embryo. Expressed at high levels in the lung and adult central nervous system, including the dorsal root ganglia.

It is found in the cell membrane. The protein resides in the postsynaptic density. Its subcellular location is the perikaryon. The protein localises to the cell projection. It localises to the dendrite. Probable cell surface receptor that regulates oligodendroglial precursor cell migration. Might also regulate differentiation of oligodendroglial precursor cells. Has growth cone collapse activity against retinal ganglion-cell axons. This Rattus norvegicus (Rat) protein is Semaphorin-4F (Sema4f).